A 144-amino-acid polypeptide reads, in one-letter code: Prefoldin subunit alpha (144 aa).

The protein belongs to the prefoldin alpha subunit family. In terms of assembly, heterohexamer of two alpha and four beta subunits.

The protein localises to the cytoplasm. Functionally, molecular chaperone capable of stabilizing a range of proteins. Seems to fulfill an ATP-independent, HSP70-like function in archaeal de novo protein folding. This Methanococcus maripaludis (strain C7 / ATCC BAA-1331) protein is Prefoldin subunit alpha.